Reading from the N-terminus, the 29-residue chain is Conotoxin pr6a (29 aa).

3 disulfides stabilise this stretch: Cys2–Cys20, Cys9–Cys24, and Cys19–Cys28.

As to expression, expressed by the venom duct.

Its subcellular location is the secreted. Intraperitoneal injection into fish (1 nmol) provokes hyperactivity and erratic swimming in various directions after 14 minutes. The polypeptide is Conotoxin pr6a (Conus parius (Cone snail)).